The sequence spans 695 residues: Variediene synthase (695 aa).

Residues 1–23 (MVPTSLSPDDTSDPVPRSSSDIQ) form a disordered region. The tract at residues 7 to 332 (SPDDTSDPVP…PRYHPWLCEE (326 aa)) is terpene cyclase. Residue aspartate 98 participates in Mg(2+) binding. Substrate-binding positions include aspartate 98, 184–187 (RIID), asparagine 228, 232–236 (SFDIE), and 324–325 (RY). The short motif at 98–102 (DNVVE) is the DDXXD 1 element. Positions 228–236 (NDYFSFDIE) match the NSE/DTE motif. Residues 353–392 (RRSISGDSISSESSVWSGASDRSARSSVSSAPSLDEGKEP) are disordered. Over residues 357–385 (SGDSISSESSVWSGASDRSARSSVSSAPS) the composition is skewed to low complexity. 3 residues coordinate isopentenyl diphosphate: lysine 415, arginine 418, and histidine 447. Mg(2+) is bound by residues aspartate 454 and aspartate 458. Positions 454–458 (DDIED) match the DDXXD 2 motif. Arginine 463 contributes to the dimethylallyl diphosphate binding site. Arginine 464 is an isopentenyl diphosphate binding site. The dimethylallyl diphosphate site is built by lysine 541, threonine 542, glutamine 579, asparagine 586, lysine 595, and lysine 605.

It in the N-terminal section; belongs to the terpene synthase family. In the C-terminal section; belongs to the FPP/GGPP synthase family. Hexamer. It depends on Mg(2+) as a cofactor.

The enzyme catalyses isopentenyl diphosphate + (2E,6E)-farnesyl diphosphate = (2E,6E,10E)-geranylgeranyl diphosphate + diphosphate. The catalysed reaction is (2E,6E,10E)-geranylgeranyl diphosphate = variediene + diphosphate. Its pathway is secondary metabolite biosynthesis; terpenoid biosynthesis. Functionally, bifunctional terpene synthase converts DMAPP and IPP, and also GGPP, into variediene as a single product. The C-terminal prenyltransferase domain of AbVS catalyzes formation of GGPP, whereas the N-terminal terpene cyclase domain catalyzes the cyclization of GGPP to variediene. This is Variediene synthase from Aspergillus brasiliensis (strain CBS 101740 / IMI 381727 / IBT 21946).